Here is a 269-residue protein sequence, read N- to C-terminus: Aminodeoxychorismate lyase (269 aa).

Lys-140 is subject to N6-(pyridoxal phosphate)lysine.

The protein belongs to the class-IV pyridoxal-phosphate-dependent aminotransferase family. Homodimer. Requires pyridoxal 5'-phosphate as cofactor.

The enzyme catalyses 4-amino-4-deoxychorismate = 4-aminobenzoate + pyruvate + H(+). The protein operates within cofactor biosynthesis; tetrahydrofolate biosynthesis; 4-aminobenzoate from chorismate: step 2/2. Its function is as follows. Involved in the biosynthesis of p-aminobenzoate (PABA), a precursor of tetrahydrofolate. Converts 4-amino-4-deoxychorismate into 4-aminobenzoate (PABA) and pyruvate. This is Aminodeoxychorismate lyase (pabC) from Escherichia coli (strain K12).